Here is a 266-residue protein sequence, read N- to C-terminus: Hemin import ATP-binding protein HmuV (266 aa).

One can recognise an ABC transporter domain in the interval 12–248 (LEASHLHYHV…ETLTQWYQAD (237 aa)). Position 44-51 (44-51 (GPNGAGKS)) interacts with ATP.

It belongs to the ABC transporter superfamily. Heme (hemin) importer (TC 3.A.1.14.5) family. As to quaternary structure, the complex is composed of two ATP-binding proteins (HmuV), two transmembrane proteins (HmuU) and a solute-binding protein (HmuT).

It localises to the cell inner membrane. Part of the ABC transporter complex HmuTUV involved in hemin import. Responsible for energy coupling to the transport system. The protein is Hemin import ATP-binding protein HmuV of Yersinia pestis bv. Antiqua (strain Antiqua).